A 350-amino-acid polypeptide reads, in one-letter code: Twinfilin-1 (350 aa).

N-acetylserine is present on Ser-2. Residues 2 to 139 (SHQTGIQASE…SLHGYRKYLL (138 aa)) enclose the ADF-H 1 domain. Phosphoserine is present on residues Ser-143 and Ser-277. In terms of domain architecture, ADF-H 2 spans 175–313 (LQGVAFPISR…TADFLYDEVH (139 aa)). Tyr-309 carries the post-translational modification Phosphotyrosine. The tract at residues 316–350 (QHAHKQSFAKPKGPAGKRGIRRLIRGPAEAEATTD) is disordered. Phosphothreonine is present on Thr-349.

It belongs to the actin-binding proteins ADF family. Twinfilin subfamily. Interacts with G-actin; ADP-actin form and capping protein (CP). May also be able to interact with TWF2 and phosphoinositides, PI(4,5)P2. When bound to PI(4,5)P2, it is down-regulated. Interacts with ACTG1. In terms of processing, phosphorylated on serine and threonine residues.

Its subcellular location is the cytoplasm. It is found in the cytoskeleton. Functionally, actin-binding protein involved in motile and morphological processes. Inhibits actin polymerization, likely by sequestering G-actin. By capping the barbed ends of filaments, it also regulates motility. Seems to play an important role in clathrin-mediated endocytosis and distribution of endocytic organelles. In Rattus norvegicus (Rat), this protein is Twinfilin-1 (Twf1).